Here is a 208-residue protein sequence, read N- to C-terminus: Uracil phosphoribosyltransferase (208 aa).

Residues Arg78, Arg103, and 130-138 each bind 5-phospho-alpha-D-ribose 1-diphosphate; that span reads DPMFATGGT. Uracil-binding positions include Ile193 and 198–200; that span reads GDA. Asp199 contributes to the 5-phospho-alpha-D-ribose 1-diphosphate binding site.

It belongs to the UPRTase family. Mg(2+) is required as a cofactor.

The catalysed reaction is UMP + diphosphate = 5-phospho-alpha-D-ribose 1-diphosphate + uracil. It functions in the pathway pyrimidine metabolism; UMP biosynthesis via salvage pathway; UMP from uracil: step 1/1. Allosterically activated by GTP. Catalyzes the conversion of uracil and 5-phospho-alpha-D-ribose 1-diphosphate (PRPP) to UMP and diphosphate. This chain is Uracil phosphoribosyltransferase, found in Campylobacter jejuni (strain RM1221).